Consider the following 181-residue polypeptide: Putative manganese efflux pump MntP (181 aa).

6 helical membrane passes run 3 to 23 (LIFLSIALAMDSVAISMANGA), 42 to 62 (IFQAFMPVIGYFLGLAFVGFI), 63 to 83 (SYIDHYVAFAILLFLGIKMIK), 101 to 121 (LMLGAFATSLDALAVGITFSF), 124 to 144 (INIAIAAFVIGLVCFVLCVIA), and 160 to 180 (LVLGGVILILIGCKIIITHLI).

The protein belongs to the MntP (TC 9.B.29) family.

It is found in the cell inner membrane. Probably functions as a manganese efflux pump. The chain is Putative manganese efflux pump MntP from Campylobacter fetus subsp. fetus (strain 82-40).